The sequence spans 600 residues: Elongation factor 4 (600 aa).

The region spanning 4-186 (SKIRNFSIIA…EIVKKIPAPQ (183 aa)) is the tr-type G domain. GTP is bound by residues 16-21 (DHGKST) and 133-136 (NKID).

Belongs to the TRAFAC class translation factor GTPase superfamily. Classic translation factor GTPase family. LepA subfamily.

The protein resides in the cell inner membrane. The enzyme catalyses GTP + H2O = GDP + phosphate + H(+). Its function is as follows. Required for accurate and efficient protein synthesis under certain stress conditions. May act as a fidelity factor of the translation reaction, by catalyzing a one-codon backward translocation of tRNAs on improperly translocated ribosomes. Back-translocation proceeds from a post-translocation (POST) complex to a pre-translocation (PRE) complex, thus giving elongation factor G a second chance to translocate the tRNAs correctly. Binds to ribosomes in a GTP-dependent manner. In Trichlorobacter lovleyi (strain ATCC BAA-1151 / DSM 17278 / SZ) (Geobacter lovleyi), this protein is Elongation factor 4.